The sequence spans 106 residues: UPF0060 membrane protein AZC_0909 (106 aa).

4 consecutive transmembrane segments (helical) span residues 4–24 (PLFA…WHVV), 27–47 (GGSP…AALL), 58–78 (AFAA…WAAE), and 84–104 (RFDA…LFAP).

It belongs to the UPF0060 family.

The protein localises to the cell inner membrane. In Azorhizobium caulinodans (strain ATCC 43989 / DSM 5975 / JCM 20966 / LMG 6465 / NBRC 14845 / NCIMB 13405 / ORS 571), this protein is UPF0060 membrane protein AZC_0909.